A 378-amino-acid chain; its full sequence is Cytochrome b (378 aa).

The next 4 membrane-spanning stretches (helical) occupy residues 33 to 53, 77 to 98, 113 to 133, and 178 to 198; these read FGSL…FLAM, WMIR…FLHT, WNIG…GYVL, and FFTF…IHLL. The heme b site is built by histidine 83 and histidine 97. Heme b is bound by residues histidine 182 and histidine 196. Histidine 201 contributes to the a ubiquinone binding site. Helical transmembrane passes span 226-246, 288-308, 320-340, and 347-366; these read TKDI…TLFT, LGGV…PATH, ITQI…WIGG, and FEAI…TLIP.

The protein belongs to the cytochrome b family. The cytochrome bc1 complex contains 11 subunits: 3 respiratory subunits (MT-CYB, CYC1 and UQCRFS1), 2 core proteins (UQCRC1 and UQCRC2) and 6 low-molecular weight proteins (UQCRH/QCR6, UQCRB/QCR7, UQCRQ/QCR8, UQCR10/QCR9, UQCR11/QCR10 and a cleavage product of UQCRFS1). This cytochrome bc1 complex then forms a dimer. The cofactor is heme b.

It is found in the mitochondrion inner membrane. Functionally, component of the ubiquinol-cytochrome c reductase complex (complex III or cytochrome b-c1 complex) that is part of the mitochondrial respiratory chain. The b-c1 complex mediates electron transfer from ubiquinol to cytochrome c. Contributes to the generation of a proton gradient across the mitochondrial membrane that is then used for ATP synthesis. The protein is Cytochrome b (MT-CYB) of Cebus albifrons (White-fronted capuchin).